The chain runs to 243 residues: Pyridoxine 5'-phosphate synthase (243 aa).

Residue Asn9 participates in 3-amino-2-oxopropyl phosphate binding. Position 11-12 (11-12 (DH)) interacts with 1-deoxy-D-xylulose 5-phosphate. Arg20 contacts 3-amino-2-oxopropyl phosphate. His45 acts as the Proton acceptor in catalysis. 2 residues coordinate 1-deoxy-D-xylulose 5-phosphate: Arg47 and His52. Residue Glu72 is the Proton acceptor of the active site. Thr102 lines the 1-deoxy-D-xylulose 5-phosphate pocket. His193 (proton donor) is an active-site residue. 3-amino-2-oxopropyl phosphate-binding positions include Gly194 and 215–216 (GH).

The protein belongs to the PNP synthase family. Homooctamer; tetramer of dimers.

Its subcellular location is the cytoplasm. The enzyme catalyses 3-amino-2-oxopropyl phosphate + 1-deoxy-D-xylulose 5-phosphate = pyridoxine 5'-phosphate + phosphate + 2 H2O + H(+). Its pathway is cofactor biosynthesis; pyridoxine 5'-phosphate biosynthesis; pyridoxine 5'-phosphate from D-erythrose 4-phosphate: step 5/5. Its function is as follows. Catalyzes the complicated ring closure reaction between the two acyclic compounds 1-deoxy-D-xylulose-5-phosphate (DXP) and 3-amino-2-oxopropyl phosphate (1-amino-acetone-3-phosphate or AAP) to form pyridoxine 5'-phosphate (PNP) and inorganic phosphate. The chain is Pyridoxine 5'-phosphate synthase from Vibrio cholerae serotype O1 (strain ATCC 39315 / El Tor Inaba N16961).